Here is a 214-residue protein sequence, read N- to C-terminus: Thymidylate kinase (214 aa).

ATP is bound at residue 10 to 17; the sequence is GIDGCGKT.

It belongs to the thymidylate kinase family.

The enzyme catalyses dTMP + ATP = dTDP + ADP. In terms of biological role, phosphorylation of dTMP to form dTDP in both de novo and salvage pathways of dTTP synthesis. The polypeptide is Thymidylate kinase (Prochlorococcus marinus subsp. pastoris (strain CCMP1986 / NIES-2087 / MED4)).